The following is a 182-amino-acid chain: Transcription repressor OFP11 (182 aa).

Positions 62–94 (PLHRRHSSENPAGVFSTNRREEEEEDETTTSVS) are disordered. Positions 104-169 (MKHIESPDPY…VSAFADTLLW (66 aa)) constitute an OVATE domain.

In terms of tissue distribution, expressed in roots, rosette and cauline leaves, shoots, stems, flower buds and siliques.

It localises to the nucleus. Transcriptional repressor that may regulate multiple aspects of plant growth and development through the regulation of BEL1-LIKE (BLH) and KNOX TALE (KNAT) homeodomain transcription factors. The protein is Transcription repressor OFP11 (OFP11) of Arabidopsis thaliana (Mouse-ear cress).